The following is a 422-amino-acid chain: 3-carboxy-cis,cis-muconate cycloisomerase (422 aa).

This sequence belongs to the class-II fumarase/aspartase family. As to quaternary structure, homotetramer.

It is found in the cytoplasm. It carries out the reaction 2-(carboxymethyl)-5-oxo-2,5-dihydro-2-furoate = 3-carboxy-cis,cis-muconate + H(+). It participates in aromatic compound metabolism; beta-ketoadipate pathway; 5-oxo-4,5-dihydro-2-furylacetate from 3-carboxy-cis,cis-muconate: step 1/2. Catalyzes an anti cycloisomerization. The chain is 3-carboxy-cis,cis-muconate cycloisomerase (pcaB) from Pseudomonas putida (Arthrobacter siderocapsulatus).